A 71-amino-acid polypeptide reads, in one-letter code: Small ribosomal subunit protein bS21 (71 aa).

It belongs to the bacterial ribosomal protein bS21 family.

The protein is Small ribosomal subunit protein bS21 of Shewanella amazonensis (strain ATCC BAA-1098 / SB2B).